Reading from the N-terminus, the 901-residue chain is Alanine--tRNA ligase (901 aa).

The Zn(2+) site is built by histidine 600, histidine 604, cysteine 704, and histidine 708.

The protein belongs to the class-II aminoacyl-tRNA synthetase family. Requires Zn(2+) as cofactor.

It is found in the cytoplasm. The enzyme catalyses tRNA(Ala) + L-alanine + ATP = L-alanyl-tRNA(Ala) + AMP + diphosphate. Functionally, catalyzes the attachment of alanine to tRNA(Ala) in a two-step reaction: alanine is first activated by ATP to form Ala-AMP and then transferred to the acceptor end of tRNA(Ala). Also edits incorrectly charged Ser-tRNA(Ala) and Gly-tRNA(Ala) via its editing domain. This is Alanine--tRNA ligase from Ignicoccus hospitalis (strain KIN4/I / DSM 18386 / JCM 14125).